Here is a 96-residue protein sequence, read N- to C-terminus: Aspartyl/glutamyl-tRNA(Asn/Gln) amidotransferase subunit C (96 aa).

The protein belongs to the GatC family. In terms of assembly, heterotrimer of A, B and C subunits.

The enzyme catalyses L-glutamyl-tRNA(Gln) + L-glutamine + ATP + H2O = L-glutaminyl-tRNA(Gln) + L-glutamate + ADP + phosphate + H(+). It carries out the reaction L-aspartyl-tRNA(Asn) + L-glutamine + ATP + H2O = L-asparaginyl-tRNA(Asn) + L-glutamate + ADP + phosphate + 2 H(+). Functionally, allows the formation of correctly charged Asn-tRNA(Asn) or Gln-tRNA(Gln) through the transamidation of misacylated Asp-tRNA(Asn) or Glu-tRNA(Gln) in organisms which lack either or both of asparaginyl-tRNA or glutaminyl-tRNA synthetases. The reaction takes place in the presence of glutamine and ATP through an activated phospho-Asp-tRNA(Asn) or phospho-Glu-tRNA(Gln). In Bacillus anthracis (strain A0248), this protein is Aspartyl/glutamyl-tRNA(Asn/Gln) amidotransferase subunit C.